The primary structure comprises 286 residues: uncharacterized protein (286 aa).

In terms of domain architecture, Radical SAM core spans 36–256 (ENPQHHPSIE…IKGCLLVQLK (221 aa)). Cys50, Cys54, and Cys57 together coordinate [4Fe-4S] cluster.

It depends on [4Fe-4S] cluster as a cofactor.

This is an uncharacterized protein from Methanocaldococcus jannaschii (strain ATCC 43067 / DSM 2661 / JAL-1 / JCM 10045 / NBRC 100440) (Methanococcus jannaschii).